Consider the following 402-residue polypeptide: 2-pyrone synthase (402 aa).

Positions 60, 63, 169, 272, 274, 310, 312, and 313 each coordinate acetoacetyl-CoA. C169 is a catalytic residue.

Belongs to the thiolase-like superfamily. Chalcone/stilbene synthases family. In terms of tissue distribution, expressed in both vegetative and reproductive organs. The expression is strong in the leaf, scape (the inflorescence stem) and corolla (both in the ligule and the unpigmented tube), moderate in the bract and carpel, detectable in the root and pappus but not detectable in the stamen.

The enzyme catalyses 2 malonyl-CoA + acetyl-CoA + 2 H(+) = triacetate lactone + 2 CO2 + 3 CoA. Its function is as follows. Polyketide synthase, which uses acetyl-CoA and two condensation reactions with malonyl-CoA to form triacetic acid lactone (also called methylpyrone), a precursor of phytoalexin. May participate in insect and pathogen resistance. In Gerbera hybrida (Daisy), this protein is 2-pyrone synthase.